Reading from the N-terminus, the 354-residue chain is MLKNDRLLRALNRQPVDRTPVWLMRQAGRYLPEYRATRARAGSFLSMAKNPDIACEVTLQPLQRFPLDAAILFSDILTIPDAMGLELYFVEGEGPKFRHPVRDAAAIHRLGVPDMETELRYVMDAVRVIRRELDGSVPLIGFSGSPWTLACYMIEGGGSKEYARIKAMAFNAPEVLHHLLGTVTDAVIAYLAAQRAAGAQALQVFDTWGGVLSPAMYHEFSLPYLTRIAHELERGEGAERTPLVLFGKGNGVYVADLAASGAEAVGVDWTISLADAAQRAGGRVALQGNLDPATLYGSPEAIRTEVGKTLDSYAQGNGGSREGHVFNLGHGMSPDMNPEHVGVLVEAVQRLSKR.

Substrate contacts are provided by residues Arg-25–Arg-29, Asp-75, Tyr-152, Thr-207, and His-330.

It belongs to the uroporphyrinogen decarboxylase family. As to quaternary structure, homodimer.

It is found in the cytoplasm. It carries out the reaction uroporphyrinogen III + 4 H(+) = coproporphyrinogen III + 4 CO2. Its pathway is porphyrin-containing compound metabolism; protoporphyrin-IX biosynthesis; coproporphyrinogen-III from 5-aminolevulinate: step 4/4. Its function is as follows. Catalyzes the decarboxylation of four acetate groups of uroporphyrinogen-III to yield coproporphyrinogen-III. The sequence is that of Uroporphyrinogen decarboxylase from Xanthomonas oryzae pv. oryzae (strain MAFF 311018).